Reading from the N-terminus, the 482-residue chain is UDP-N-acetylmuramate--L-alanine ligase (482 aa).

Residue 123-129 (GTHGKTT) coordinates ATP.

It belongs to the MurCDEF family.

The protein resides in the cytoplasm. It catalyses the reaction UDP-N-acetyl-alpha-D-muramate + L-alanine + ATP = UDP-N-acetyl-alpha-D-muramoyl-L-alanine + ADP + phosphate + H(+). The protein operates within cell wall biogenesis; peptidoglycan biosynthesis. Its function is as follows. Cell wall formation. The sequence is that of UDP-N-acetylmuramate--L-alanine ligase from Pseudomonas putida (strain ATCC 47054 / DSM 6125 / CFBP 8728 / NCIMB 11950 / KT2440).